The following is a 467-amino-acid chain: Dimethylamine methyltransferase MtbB1 (467 aa).

Position 356 (Pyl-356) is a non-standard amino acid, pyrrolysine.

This sequence belongs to the dimethylamine methyltransferase family.

It carries out the reaction Co(I)-[dimethylamine-specific corrinoid protein] + dimethylamine + H(+) = methyl-Co(III)-[dimethylamine-specific corrinoid protein] + methylamine. It functions in the pathway one-carbon metabolism; methanogenesis from dimethylamine. Functionally, catalyzes the transfer of a methyl group from dimethylamine to the corrinoid cofactor of MtbC. In Methanosarcina barkeri (strain Fusaro / DSM 804), this protein is Dimethylamine methyltransferase MtbB1 (mtbB1).